We begin with the raw amino-acid sequence, 304 residues long: Lipoprotein signal peptidase (304 aa).

3 consecutive transmembrane segments (helical) span residues 28–48 (IKIK…IVFV), 86–106 (PAVP…TFIF), and 112–132 (LIVL…DRSV). Residues D148 and D163 contribute to the active site. Residues 163–183 (DICIVTGFALIFLTFVVDIFL) traverse the membrane as a helical segment.

Belongs to the peptidase A8 family.

The protein resides in the cell membrane. The catalysed reaction is Release of signal peptides from bacterial membrane prolipoproteins. Hydrolyzes -Xaa-Yaa-Zaa-|-(S,diacylglyceryl)Cys-, in which Xaa is hydrophobic (preferably Leu), and Yaa (Ala or Ser) and Zaa (Gly or Ala) have small, neutral side chains.. It functions in the pathway protein modification; lipoprotein biosynthesis (signal peptide cleavage). Its function is as follows. This protein specifically catalyzes the removal of signal peptides from prolipoproteins. The protein is Lipoprotein signal peptidase of Mycoplasmoides gallisepticum (strain R(low / passage 15 / clone 2)) (Mycoplasma gallisepticum).